Here is a 345-residue protein sequence, read N- to C-terminus: L-rhamnose-proton symporter (345 aa).

10 helical membrane passes run 4–24 (AITM…CFYA), 38–58 (WSVG…ALLL), 68–88 (FSAA…IGNI), 101–121 (MGIG…TPLL), 131–151 (TAGG…VAIV), 175–195 (LVLA…MDAA), 214–234 (LPSY…FCFI), 259–279 (VLLS…YAWG), 290–310 (ISWM…GLLL), and 323–343 (VLSL…LGMA).

This sequence belongs to the L-rhamnose transporter (TC 2.A.7.6) family.

It is found in the cell inner membrane. It carries out the reaction L-rhamnopyranose(in) + H(+)(in) = L-rhamnopyranose(out) + H(+)(out). Functionally, uptake of L-rhamnose across the cytoplasmic membrane with the concomitant transport of protons into the cell (symport system). The sequence is that of L-rhamnose-proton symporter from Cronobacter sakazakii (strain ATCC BAA-894) (Enterobacter sakazakii).